The sequence spans 753 residues: Neuroendocrine convertase 1 (753 aa).

A signal peptide spans 1–27 (MGRRAWTLQCTAFSLFCAWCAMNSVKA). Residues 28 to 110 (KKQFVNEWAA…QQYEKERSKR (83 aa)) constitute a propeptide that is removed on maturation. Residues 129–450 (QWYLQDTRMT…FGLLNAKALV (322 aa)) form the Peptidase S8 domain. Asp167 acts as the Charge relay system in catalysis. N-linked (GlcNAc...) asparagine glycosylation occurs at Asn173. Catalysis depends on His208, which acts as the Charge relay system. Disulfide bonds link Cys225-Cys374 and Cys317-Cys347. Ser382 serves as the catalytic Charge relay system. Asn401 carries N-linked (GlcNAc...) asparagine glycosylation. Residues 460–597 (SVPEKKECVV…KLILHGTSSQ (138 aa)) form the P/Homo B domain. Cys467 and Cys494 are joined by a disulfide. Disordered regions lie at residues 617-657 (RRGV…RRDE) and 676-695 (SKNSPSKQSPKKPPSAKPNI).

This sequence belongs to the peptidase S8 family. Furin subfamily. The cofactor is Ca(2+).

Its subcellular location is the cytoplasmic vesicle. The protein localises to the secretory vesicle. The enzyme catalyses Release of protein hormones, neuropeptides and renin from their precursors, generally by hydrolysis of -Lys-Arg-|- bonds.. Involved in the processing of hormone and other protein precursors at sites comprised of pairs of basic amino acid residues. Substrates include POMC, renin, enkephalin, dynorphin, somatostatin, insulin and AGRP. The polypeptide is Neuroendocrine convertase 1 (PCSK1) (Bos taurus (Bovine)).